A 260-amino-acid polypeptide reads, in one-letter code: uncharacterized protein (260 aa).

In terms of domain architecture, ABC transporter spans 4-231; that stretch reads LHVDHVTHTY…PKELAAMLPF (228 aa). Residue 40–47 participates in ATP binding; it reads GPSGCGKT.

The protein belongs to the ABC transporter superfamily.

This is an uncharacterized protein from Bacillus subtilis (strain 168).